A 146-amino-acid chain; its full sequence is Putative esterase DR_2321 (146 aa).

The protein belongs to the thioesterase PaaI family.

The protein is Putative esterase DR_2321 of Deinococcus radiodurans (strain ATCC 13939 / DSM 20539 / JCM 16871 / CCUG 27074 / LMG 4051 / NBRC 15346 / NCIMB 9279 / VKM B-1422 / R1).